A 108-amino-acid polypeptide reads, in one-letter code: Trissin (108 aa).

Residues 1–29 (MTKTTMHWLAHFQIILLCIWLMCPPSSQA) form the signal peptide. Disulfide bonds link cysteine 32/cysteine 43, cysteine 35/cysteine 52, and cysteine 39/cysteine 51. Positions 57 to 108 (RKRSDPDALRQSSNRRLIDFILLQGRALFTQELRERRHNGTLMDLGLNTYYP) are excised as a propeptide.

The protein localises to the secreted. Its function is as follows. Activates the G-protein coupled receptor TrissinR in vitro, leading to increased intracellular calcium ion levels. This is Trissin from Drosophila melanogaster (Fruit fly).